The primary structure comprises 233 residues: Uracil-DNA glycosylase (233 aa).

The active-site Proton acceptor is the aspartate 70.

The protein belongs to the uracil-DNA glycosylase (UDG) superfamily. UNG family.

The protein localises to the cytoplasm. The catalysed reaction is Hydrolyzes single-stranded DNA or mismatched double-stranded DNA and polynucleotides, releasing free uracil.. Functionally, excises uracil residues from the DNA which can arise as a result of misincorporation of dUMP residues by DNA polymerase or due to deamination of cytosine. In Helicobacter pylori (strain Shi470), this protein is Uracil-DNA glycosylase.